The primary structure comprises 365 residues: Dihydroorotate dehydrogenase (quinone) (365 aa).

Residues 61 to 65 (AGFDK) and S85 contribute to the FMN site. K65 is a substrate binding site. 110–114 (NRMGF) provides a ligand contact to substrate. FMN is bound by residues N139 and N170. N170 provides a ligand contact to substrate. The active-site Nucleophile is the S173. N175 lines the substrate pocket. Residues K214 and S242 each coordinate FMN. 243-244 (NT) serves as a coordination point for substrate. FMN-binding positions include G266, G295, and 316-317 (YS).

This sequence belongs to the dihydroorotate dehydrogenase family. Type 2 subfamily. Monomer. Requires FMN as cofactor.

The protein localises to the cell membrane. It catalyses the reaction (S)-dihydroorotate + a quinone = orotate + a quinol. It participates in pyrimidine metabolism; UMP biosynthesis via de novo pathway; orotate from (S)-dihydroorotate (quinone route): step 1/1. Catalyzes the conversion of dihydroorotate to orotate with quinone as electron acceptor. In Bradyrhizobium diazoefficiens (strain JCM 10833 / BCRC 13528 / IAM 13628 / NBRC 14792 / USDA 110), this protein is Dihydroorotate dehydrogenase (quinone).